The chain runs to 807 residues: Glycerol-3-phosphate acyltransferase (807 aa).

The HXXXXD motif motif lies at 308-313 (CHRSHM).

The protein belongs to the GPAT/DAPAT family.

The protein localises to the cell inner membrane. It carries out the reaction sn-glycerol 3-phosphate + an acyl-CoA = a 1-acyl-sn-glycero-3-phosphate + CoA. It functions in the pathway phospholipid metabolism; CDP-diacylglycerol biosynthesis; CDP-diacylglycerol from sn-glycerol 3-phosphate: step 1/3. This is Glycerol-3-phosphate acyltransferase from Shewanella halifaxensis (strain HAW-EB4).